Here is a 157-residue protein sequence, read N- to C-terminus: GTP-dependent dephospho-CoA kinase (157 aa).

Positions 40, 59, 61, 107, and 128 each coordinate GTP.

This sequence belongs to the GTP-dependent DPCK family.

The catalysed reaction is 3'-dephospho-CoA + GTP = GDP + CoA + H(+). It participates in cofactor biosynthesis; coenzyme A biosynthesis. In terms of biological role, catalyzes the GTP-dependent phosphorylation of the 3'-hydroxyl group of dephosphocoenzyme A to form coenzyme A (CoA). This Desulfurococcus amylolyticus (strain DSM 18924 / JCM 16383 / VKM B-2413 / 1221n) (Desulfurococcus kamchatkensis) protein is GTP-dependent dephospho-CoA kinase.